The primary structure comprises 179 residues: Interleukin-22 (179 aa).

A signal peptide spans 1-33; the sequence is MAALQKSVSSFLMGTLATSCLLLLALLVQGGAA. 2 disulfides stabilise this stretch: cysteine 40–cysteine 132 and cysteine 89–cysteine 178. Residues asparagine 54, asparagine 68, and asparagine 97 are each glycosylated (N-linked (GlcNAc...) asparagine).

Belongs to the IL-10 family.

The protein localises to the secreted. Cytokine that plays a critical role in modulating tissue responses during inflammation. Plays an essential role in the regeneration of epithelial cells to maintain barrier function after injury and for the prevention of further tissue damage. Unlike most of the cytokines, has no effect on immune cells. Signals through a heterodimeric receptor composed of two subunits, the specific receptor IL22RA1 which is present on non-immune cells in many organs and the shared subunit IL10RB. Ligation of IL22RA1 with IL22 induces activation of the tyrosine kinases JAK1 and TYK2, which in turn activates STAT3. In turn, promotes cell survival and proliferation through STAT3, ERK1/2 and PI3K/AKT pathways. Promotes phosphorylation of GSK3B at 'Ser-9' and CTTN. Promotes epithelial cell spreading. This chain is Interleukin-22 (IL22), found in Homo sapiens (Human).